The primary structure comprises 60 residues: Large ribosomal subunit protein bL32 (60 aa).

The tract at residues 1 to 60 (MAVQQNKKSPSKRGMHRSHDFLVNPATAIEPNTGETHLRHHISPNGFYRGRKVLKTKADE) is disordered. Residues 49–60 (RGRKVLKTKADE) show a composition bias toward basic residues.

It belongs to the bacterial ribosomal protein bL32 family.

This chain is Large ribosomal subunit protein bL32, found in Bordetella bronchiseptica (strain ATCC BAA-588 / NCTC 13252 / RB50) (Alcaligenes bronchisepticus).